We begin with the raw amino-acid sequence, 139 residues long: Nucleoside diphosphate kinase (139 aa).

ATP contacts are provided by K11, F59, R87, T93, R104, and N114. H117 serves as the catalytic Pros-phosphohistidine intermediate.

It belongs to the NDK family. In terms of assembly, homotetramer. Requires Mg(2+) as cofactor.

It is found in the cytoplasm. The catalysed reaction is a 2'-deoxyribonucleoside 5'-diphosphate + ATP = a 2'-deoxyribonucleoside 5'-triphosphate + ADP. The enzyme catalyses a ribonucleoside 5'-diphosphate + ATP = a ribonucleoside 5'-triphosphate + ADP. Major role in the synthesis of nucleoside triphosphates other than ATP. The ATP gamma phosphate is transferred to the NDP beta phosphate via a ping-pong mechanism, using a phosphorylated active-site intermediate. This chain is Nucleoside diphosphate kinase, found in Wolbachia pipientis wMel.